A 255-amino-acid chain; its full sequence is uncharacterized protein (255 aa).

The protein belongs to the methyltransferase superfamily.

This is an uncharacterized protein from Mycolicibacterium gilvum (strain PYR-GCK) (Mycobacterium gilvum (strain PYR-GCK)).